The chain runs to 20 residues: Probable cinnamyl alcohol dehydrogenase 1 (20 aa).

This sequence belongs to the zinc-containing alcohol dehydrogenase family. It depends on Zn(2+) as a cofactor.

The enzyme catalyses (E)-cinnamyl alcohol + NADP(+) = (E)-cinnamaldehyde + NADPH + H(+). The catalysed reaction is (E)-coniferol + NADP(+) = (E)-coniferaldehyde + NADPH + H(+). It catalyses the reaction (E)-sinapyl alcohol + NADP(+) = (E)-sinapaldehyde + NADPH + H(+). It carries out the reaction (E)-4-coumaroyl alcohol + NADP(+) = (E)-4-coumaraldehyde + NADPH + H(+). The enzyme catalyses (E)-caffeyl alcohol + NADP(+) = (E)-caffeyl aldehyde + NADPH + H(+). It participates in aromatic compound metabolism; phenylpropanoid biosynthesis. In terms of biological role, involved in lignin biosynthesis. Catalyzes the final step specific for the production of lignin monomers, like coniferyl alcohol, sinapyl alcohol and 4-coumaryl alcohol. This is Probable cinnamyl alcohol dehydrogenase 1 from Pseudotsuga menziesii (Douglas-fir).